Reading from the N-terminus, the 907-residue chain is Probable dipeptidyl-aminopeptidase B (907 aa).

Residues 1-26 (MPRQRAPKEEEAELLTKQERSTRSSE) show a composition bias toward basic and acidic residues. Residues 1-70 (MPRQRAPKEE…EKYTDEDDEA (70 aa)) form a disordered region. The Cytoplasmic segment spans residues 1–93 (MPRQRAPKEE…PVAVDKKTRR (93 aa)). Residues 30–44 (DASVSSISTTSLVLE) show a composition bias toward low complexity. The helical; Signal-anchor for type II membrane protein transmembrane segment at 94 to 114 (WLWIVGIACVTGWALALVFFL) threads the bilayer. The Vacuolar portion of the chain corresponds to 115–907 (MSGSYKHVST…SQVDARLERR (793 aa)). Residue asparagine 560 is glycosylated (N-linked (GlcNAc...) asparagine). The active-site Charge relay system is serine 751. An N-linked (GlcNAc...) asparagine glycan is attached at asparagine 805. Residues aspartate 828 and histidine 861 each act as charge relay system in the active site.

The protein belongs to the peptidase S9B family.

It is found in the vacuole membrane. It catalyses the reaction Release of an N-terminal dipeptide, Xaa-Yaa-|-Zaa-, from a polypeptide, preferentially when Yaa is Pro, provided Zaa is neither Pro nor hydroxyproline.. Its function is as follows. Type IV dipeptidyl-peptidase which removes N-terminal dipeptides sequentially from polypeptides having unsubstituted N-termini provided that the penultimate residue is proline. The sequence is that of Probable dipeptidyl-aminopeptidase B (dapB) from Pyrenophora teres f. teres (strain 0-1) (Barley net blotch fungus).